The sequence spans 205 residues: Putative 3-methyladenine DNA glycosylase (205 aa).

It belongs to the DNA glycosylase MPG family.

This is Putative 3-methyladenine DNA glycosylase from Bacillus anthracis (strain A0248).